The chain runs to 364 residues: UDP-N-acetylglucosamine--N-acetylmuramyl-(pentapeptide) pyrophosphoryl-undecaprenol N-acetylglucosamine transferase (364 aa).

UDP-N-acetyl-alpha-D-glucosamine contacts are provided by residues 12–14 (TGG), Asn124, Arg167, Ser195, Ile249, 268–273 (ALTVSE), and Gln294.

The protein belongs to the glycosyltransferase 28 family. MurG subfamily.

Its subcellular location is the cell inner membrane. The catalysed reaction is di-trans,octa-cis-undecaprenyl diphospho-N-acetyl-alpha-D-muramoyl-L-alanyl-D-glutamyl-meso-2,6-diaminopimeloyl-D-alanyl-D-alanine + UDP-N-acetyl-alpha-D-glucosamine = di-trans,octa-cis-undecaprenyl diphospho-[N-acetyl-alpha-D-glucosaminyl-(1-&gt;4)]-N-acetyl-alpha-D-muramoyl-L-alanyl-D-glutamyl-meso-2,6-diaminopimeloyl-D-alanyl-D-alanine + UDP + H(+). It participates in cell wall biogenesis; peptidoglycan biosynthesis. Functionally, cell wall formation. Catalyzes the transfer of a GlcNAc subunit on undecaprenyl-pyrophosphoryl-MurNAc-pentapeptide (lipid intermediate I) to form undecaprenyl-pyrophosphoryl-MurNAc-(pentapeptide)GlcNAc (lipid intermediate II). This Alteromonas mediterranea (strain DSM 17117 / CIP 110805 / LMG 28347 / Deep ecotype) protein is UDP-N-acetylglucosamine--N-acetylmuramyl-(pentapeptide) pyrophosphoryl-undecaprenol N-acetylglucosamine transferase.